A 66-amino-acid polypeptide reads, in one-letter code: Beta-toxin Cll1m (66 aa).

Residues 1–66 form the LCN-type CS-alpha/beta domain; the sequence is KEGYIVNLST…VWPLPKKTCT (66 aa). Intrachain disulfides connect Cys-12/Cys-65, Cys-16/Cys-41, Cys-25/Cys-46, and Cys-29/Cys-48. Thr-66 carries the post-translational modification Threonine amide.

Belongs to the long (4 C-C) scorpion toxin superfamily. Sodium channel inhibitor family. Beta subfamily. Expressed by the venom gland.

The protein resides in the secreted. Functionally, beta toxins bind voltage-independently at site-4 of sodium channels (Nav) and shift the voltage of activation toward more negative potentials thereby affecting sodium channel activation and promoting spontaneous and repetitive firing. The sequence is that of Beta-toxin Cll1m from Centruroides limpidus (Mexican scorpion).